A 394-amino-acid polypeptide reads, in one-letter code: Flavohemoprotein (394 aa).

One can recognise a Globin domain in the interval 1–136 (MLSENTINIV…LANVFIQREE (136 aa)). His85 lines the heme b pocket. Residues Tyr95 and Glu135 each act as charge relay system in the active site. The segment at 147–394 (GGWRGLREFE…YECFGPHKVV (248 aa)) is reductase. The FAD-binding FR-type domain maps to 150–255 (RGLREFELVE…AAPAGDFFLD (106 aa)). Residues Tyr188 and 204–207 (RQYS) each bind FAD. Residue 268–273 (GVGLTP) coordinates NADP(+). 387-390 (CFGP) is an FAD binding site.

It belongs to the globin family. Two-domain flavohemoproteins subfamily. This sequence in the C-terminal section; belongs to the flavoprotein pyridine nucleotide cytochrome reductase family. Heme b serves as cofactor. The cofactor is FAD.

It carries out the reaction 2 nitric oxide + NADPH + 2 O2 = 2 nitrate + NADP(+) + H(+). The catalysed reaction is 2 nitric oxide + NADH + 2 O2 = 2 nitrate + NAD(+) + H(+). Its function is as follows. Is involved in NO detoxification in an aerobic process, termed nitric oxide dioxygenase (NOD) reaction that utilizes O(2) and NAD(P)H to convert NO to nitrate, which protects the bacterium from various noxious nitrogen compounds. Therefore, plays a central role in the inducible response to nitrosative stress. This chain is Flavohemoprotein, found in Vibrio vulnificus (strain CMCP6).